The sequence spans 1218 residues: Protein jagged-1 (1218 aa).

A signal peptide spans methionine 1–glycine 33. Residues glutamine 34 to aspartate 1067 are Extracellular-facing. N-linked (GlcNAc...) asparagine glycosylation is present at asparagine 143. The region spanning valine 185–cysteine 229 is the DSL domain. Intrachain disulfides connect cysteine 187-cysteine 196 and cysteine 200-cysteine 212. Residues phenylalanine 199–phenylalanine 207 are important for interaction with NOTCH1. A glycan (N-linked (GlcNAc...) asparagine) is linked at asparagine 217. Cystine bridges form between cysteine 220–cysteine 229, cysteine 234–cysteine 245, cysteine 238–cysteine 251, cysteine 253–cysteine 262, cysteine 265–cysteine 276, cysteine 271–cysteine 282, cysteine 284–cysteine 293, cysteine 300–cysteine 312, cysteine 306–cysteine 322, cysteine 324–cysteine 333, cysteine 340–cysteine 351, cysteine 345–cysteine 360, cysteine 362–cysteine 371, cysteine 378–cysteine 389, cysteine 383–cysteine 398, cysteine 400–cysteine 409, cysteine 416–cysteine 427, cysteine 421–cysteine 436, cysteine 438–cysteine 447, cysteine 454–cysteine 464, cysteine 458–cysteine 473, cysteine 475–cysteine 484, cysteine 491–cysteine 502, cysteine 496–cysteine 511, cysteine 513–cysteine 522, cysteine 529–cysteine 540, cysteine 534–cysteine 549, cysteine 551–cysteine 560, cysteine 578–cysteine 605, cysteine 599–cysteine 615, cysteine 617–cysteine 626, cysteine 633–cysteine 644, cysteine 638–cysteine 653, cysteine 655–cysteine 664, cysteine 671–cysteine 682, cysteine 676–cysteine 691, cysteine 693–cysteine 702, cysteine 709–cysteine 720, cysteine 714–cysteine 729, and cysteine 731–cysteine 740. Residues asparagine 230 to aspartate 263 form the EGF-like 1 domain. The EGF-like 2; atypical domain occupies lysine 264–aspartate 294. 2 consecutive EGF-like domains span residues aspartate 296 to glutamate 334 and alanine 336 to serine 372. Residues asparagine 374–glutamine 410 enclose the EGF-like 5; calcium-binding domain. N-linked (GlcNAc...) asparagine glycosylation is present at asparagine 382. Residues aspartate 412 to aspartate 448 form the EGF-like 6; calcium-binding domain. Positions asparagine 450–glutamate 485 constitute an EGF-like 7; calcium-binding domain. The 37-residue stretch at aspartate 487–glutamine 523 folds into the EGF-like 8; calcium-binding domain. EGF-like domains follow at residues aspartate 525–serine 561 and aspartate 586–histidine 627. Asparagine 559 carries N-linked (GlcNAc...) asparagine glycosylation. The EGF-like 11; calcium-binding domain occupies asparagine 629–glutamate 665. Residues asparagine 667–histidine 703 form the EGF-like 12; calcium-binding domain. EGF-like domains lie at arginine 705–asparagine 741 and arginine 744–threonine 780. The N-linked (GlcNAc...) asparagine glycan is linked to asparagine 745. 9 disulfides stabilise this stretch: cysteine 748/cysteine 759, cysteine 753/cysteine 768, cysteine 770/cysteine 779, cysteine 786/cysteine 797, cysteine 791/cysteine 806, cysteine 808/cysteine 817, cysteine 824/cysteine 835, cysteine 829/cysteine 844, and cysteine 846/cysteine 855. The EGF-like 15; calcium-binding domain maps to asparagine 782–arginine 818. Residues asparagine 820 to histidine 856 form the EGF-like 16; calcium-binding domain. Asparagine 960, asparagine 991, asparagine 1045, and asparagine 1064 each carry an N-linked (GlcNAc...) asparagine glycan. Residues phenylalanine 1068 to valine 1093 form a helical membrane-spanning segment. Topologically, residues arginine 1094–valine 1218 are cytoplasmic. Residues arginine 1181–valine 1218 form a disordered region. Residues glycine 1188–lysine 1199 are compositionally biased toward polar residues.

Interacts with NOTCH1, NOTCH2 and NOTCH3. In terms of tissue distribution, widely expressed in many tissues, with highest expression in brain, heart, muscle and thymus.

It is found in the membrane. It localises to the cell membrane. In terms of biological role, ligand for multiple Notch receptors and involved in the mediation of Notch signaling. May be involved in cell-fate decisions during hematopoiesis. Seems to be involved in early and late stages of mammalian cardiovascular development. Inhibits myoblast differentiation. May regulate fibroblast growth factor-induced angiogenesis. The protein is Protein jagged-1 (Jag1) of Mus musculus (Mouse).